Consider the following 142-residue polypeptide: Large ribosomal subunit protein uL11 (142 aa).

It belongs to the universal ribosomal protein uL11 family. In terms of assembly, part of the ribosomal stalk of the 50S ribosomal subunit. Interacts with L10 and the large rRNA to form the base of the stalk. L10 forms an elongated spine to which L12 dimers bind in a sequential fashion forming a multimeric L10(L12)X complex. One or more lysine residues are methylated.

Forms part of the ribosomal stalk which helps the ribosome interact with GTP-bound translation factors. In Liberibacter asiaticus (Citrus greening disease), this protein is Large ribosomal subunit protein uL11.